The chain runs to 395 residues: Carbohydrate sulfotransferase 6 (395 aa).

Over 1-5 the chain is Cytoplasmic; the sequence is MWLPR. Residues 6–26 form a helical; Signal-anchor for type II membrane protein membrane-spanning segment; sequence VSSTAVTALLLAQTFLLLFLV. Residues 27–395 are Lumenal-facing; that stretch reads SRPGPSSPAG…ASSTASHPRN (369 aa). 49–55 lines the 3'-phosphoadenylyl sulfate pocket; the sequence is WRSGSSF. Asparagine 116 carries N-linked (GlcNAc...) asparagine glycosylation. 3'-phosphoadenylyl sulfate is bound at residue 202-210; that stretch reads RDPRAVLRS. 3 N-linked (GlcNAc...) asparagine glycosylation sites follow: asparagine 229, asparagine 305, and asparagine 328.

This sequence belongs to the sulfotransferase 1 family. Gal/GlcNAc/GalNAc subfamily. As to expression, expressed in cornea. Mainly expressed in brain. Also expressed in spinal cord and trachea.

It localises to the golgi apparatus membrane. It catalyses the reaction 3'-phosphoadenylyl sulfate + keratan = adenosine 3',5'-bisphosphate + keratan 6'-sulfate.. Sulfotransferase that utilizes 3'-phospho-5'-adenylyl sulfate (PAPS) as sulfonate donor to catalyze the transfer of sulfate to position 6 of non-reducing N-acetylglucosamine (GlcNAc) residues of keratan. Cooperates with B4GALT4 galactosyltransferase and B3GNT7 N-acetylglucosaminyltransferase to construct and elongate the sulfated disaccharide unit [-&gt;3Galbeta1-&gt;4(6-sulfoGlcNAcbeta)1-&gt;] within keratan sulfate polymer. Involved in biosynthesis of keratan sulfate in cornea, with an impact on proteoglycan fibril organization and corneal transparency. Involved in sulfation of endothelial mucins such as GLYCAM1. The sequence is that of Carbohydrate sulfotransferase 6 from Homo sapiens (Human).